Reading from the N-terminus, the 186-residue chain is TATA-box-binding protein F (186 aa).

2 tandem repeats follow at residues 10 to 86 (IENV…FDDL) and 101 to 179 (VQNI…NDRL).

Belongs to the TBP family.

In terms of biological role, general factor that plays a role in the activation of archaeal genes transcribed by RNA polymerase. Binds specifically to the TATA box promoter element which lies close to the position of transcription initiation. The sequence is that of TATA-box-binding protein F (tbpF) from Halobacterium salinarum (strain ATCC 700922 / JCM 11081 / NRC-1) (Halobacterium halobium).